A 177-amino-acid polypeptide reads, in one-letter code: ATP synthase subunit b, chloroplastic (177 aa).

Residues 26–44 traverse the membrane as a helical segment; sequence IINLSIVLFVVIRFLGEAL.

It belongs to the ATPase B chain family. In terms of assembly, F-type ATPases have 2 components, F(1) - the catalytic core - and F(0) - the membrane proton channel. F(1) has five subunits: alpha(3), beta(3), gamma(1), delta(1), epsilon(1). F(0) has four main subunits: a(1), b(1), b'(1) and c(10-14). The alpha and beta chains form an alternating ring which encloses part of the gamma chain. F(1) is attached to F(0) by a central stalk formed by the gamma and epsilon chains, while a peripheral stalk is formed by the delta, b and b' chains.

It is found in the plastid. Its subcellular location is the chloroplast thylakoid membrane. Its function is as follows. F(1)F(0) ATP synthase produces ATP from ADP in the presence of a proton or sodium gradient. F-type ATPases consist of two structural domains, F(1) containing the extramembraneous catalytic core and F(0) containing the membrane proton channel, linked together by a central stalk and a peripheral stalk. During catalysis, ATP synthesis in the catalytic domain of F(1) is coupled via a rotary mechanism of the central stalk subunits to proton translocation. In terms of biological role, component of the F(0) channel, it forms part of the peripheral stalk, linking F(1) to F(0). The polypeptide is ATP synthase subunit b, chloroplastic (Bigelowiella natans (Pedinomonas minutissima)).